A 368-amino-acid polypeptide reads, in one-letter code: Phospho-N-acetylmuramoyl-pentapeptide-transferase (368 aa).

Helical transmembrane passes span leucine 31 to leucine 51, threonine 73 to leucine 93, valine 98 to methionine 118, phenylalanine 134 to threonine 154, glycine 175 to serine 195, valine 213 to alanine 233, valine 249 to alanine 269, valine 271 to leucine 291, isoleucine 296 to valine 316, and lysine 345 to leucine 365.

The protein belongs to the glycosyltransferase 4 family. MraY subfamily. Requires Mg(2+) as cofactor.

It localises to the cell inner membrane. The enzyme catalyses UDP-N-acetyl-alpha-D-muramoyl-L-alanyl-gamma-D-glutamyl-meso-2,6-diaminopimeloyl-D-alanyl-D-alanine + di-trans,octa-cis-undecaprenyl phosphate = di-trans,octa-cis-undecaprenyl diphospho-N-acetyl-alpha-D-muramoyl-L-alanyl-D-glutamyl-meso-2,6-diaminopimeloyl-D-alanyl-D-alanine + UMP. Its pathway is cell wall biogenesis; peptidoglycan biosynthesis. In terms of biological role, catalyzes the initial step of the lipid cycle reactions in the biosynthesis of the cell wall peptidoglycan: transfers peptidoglycan precursor phospho-MurNAc-pentapeptide from UDP-MurNAc-pentapeptide onto the lipid carrier undecaprenyl phosphate, yielding undecaprenyl-pyrophosphoryl-MurNAc-pentapeptide, known as lipid I. This chain is Phospho-N-acetylmuramoyl-pentapeptide-transferase, found in Leptospira interrogans serogroup Icterohaemorrhagiae serovar copenhageni (strain Fiocruz L1-130).